Reading from the N-terminus, the 344-residue chain is Sulfate/thiosulfate import ATP-binding protein CysA (344 aa).

The ABC transporter domain maps to 9-239; the sequence is IQVSQVSKQF…PATPFVMSFI (231 aa). 41–48 contacts ATP; it reads GPSGSGKS.

Belongs to the ABC transporter superfamily. Sulfate/tungstate importer (TC 3.A.1.6) family. As to quaternary structure, the complex is composed of two ATP-binding proteins (CysA), two transmembrane proteins (CysT and CysW) and a solute-binding protein (CysP).

The protein localises to the cell inner membrane. It catalyses the reaction sulfate(out) + ATP + H2O = sulfate(in) + ADP + phosphate + H(+). The catalysed reaction is thiosulfate(out) + ATP + H2O = thiosulfate(in) + ADP + phosphate + H(+). Functionally, part of the ABC transporter complex CysAWTP involved in sulfate/thiosulfate import. Responsible for energy coupling to the transport system. This chain is Sulfate/thiosulfate import ATP-binding protein CysA, found in Synechococcus elongatus (strain ATCC 33912 / PCC 7942 / FACHB-805) (Anacystis nidulans R2).